Consider the following 244-residue polypeptide: 3-deoxy-manno-octulosonate cytidylyltransferase (244 aa).

Belongs to the KdsB family.

Its subcellular location is the cytoplasm. It carries out the reaction 3-deoxy-alpha-D-manno-oct-2-ulosonate + CTP = CMP-3-deoxy-beta-D-manno-octulosonate + diphosphate. It functions in the pathway nucleotide-sugar biosynthesis; CMP-3-deoxy-D-manno-octulosonate biosynthesis; CMP-3-deoxy-D-manno-octulosonate from 3-deoxy-D-manno-octulosonate and CTP: step 1/1. The protein operates within bacterial outer membrane biogenesis; lipopolysaccharide biosynthesis. In terms of biological role, activates KDO (a required 8-carbon sugar) for incorporation into bacterial lipopolysaccharide in Gram-negative bacteria. This is 3-deoxy-manno-octulosonate cytidylyltransferase from Anaeromyxobacter sp. (strain Fw109-5).